The chain runs to 451 residues: UDP-N-acetylmuramoylalanine--D-glutamate ligase (451 aa).

An ATP-binding site is contributed by glycine 120–threonine 126.

The protein belongs to the MurCDEF family.

The protein localises to the cytoplasm. The enzyme catalyses UDP-N-acetyl-alpha-D-muramoyl-L-alanine + D-glutamate + ATP = UDP-N-acetyl-alpha-D-muramoyl-L-alanyl-D-glutamate + ADP + phosphate + H(+). The protein operates within cell wall biogenesis; peptidoglycan biosynthesis. Functionally, cell wall formation. Catalyzes the addition of glutamate to the nucleotide precursor UDP-N-acetylmuramoyl-L-alanine (UMA). In Bacillus pumilus (strain SAFR-032), this protein is UDP-N-acetylmuramoylalanine--D-glutamate ligase.